Here is a 193-residue protein sequence, read N- to C-terminus: Holliday junction branch migration complex subunit RuvA (193 aa).

The interval 1–64 (MIGRIAGILL…EDAHLLYGFL (64 aa)) is domain I. Residues 65-139 (TPQERTTFRE…GKLGADLGAL (75 aa)) are domain II. The segment at 139 to 143 (LAGAA) is flexible linker. The tract at residues 144–193 (SQSDHATDILNALVALGYSEKEGLAAIKNVPAGTGVSEGIKLALKALSKV) is domain III.

Belongs to the RuvA family. Homotetramer. Forms an RuvA(8)-RuvB(12)-Holliday junction (HJ) complex. HJ DNA is sandwiched between 2 RuvA tetramers; dsDNA enters through RuvA and exits via RuvB. An RuvB hexamer assembles on each DNA strand where it exits the tetramer. Each RuvB hexamer is contacted by two RuvA subunits (via domain III) on 2 adjacent RuvB subunits; this complex drives branch migration. In the full resolvosome a probable DNA-RuvA(4)-RuvB(12)-RuvC(2) complex forms which resolves the HJ.

Its subcellular location is the cytoplasm. The RuvA-RuvB-RuvC complex processes Holliday junction (HJ) DNA during genetic recombination and DNA repair, while the RuvA-RuvB complex plays an important role in the rescue of blocked DNA replication forks via replication fork reversal (RFR). RuvA specifically binds to HJ cruciform DNA, conferring on it an open structure. The RuvB hexamer acts as an ATP-dependent pump, pulling dsDNA into and through the RuvAB complex. HJ branch migration allows RuvC to scan DNA until it finds its consensus sequence, where it cleaves and resolves the cruciform DNA. This chain is Holliday junction branch migration complex subunit RuvA, found in Burkholderia ambifaria (strain MC40-6).